Consider the following 200-residue polypeptide: NADH-quinone oxidoreductase subunit I 1 (200 aa).

4Fe-4S ferredoxin-type domains are found at residues 52-82 and 98-127; these read LNRH…VEGA and RVYQ…MTNE. [4Fe-4S] cluster contacts are provided by Cys-62, Cys-65, Cys-68, Cys-72, Cys-107, Cys-110, Cys-113, and Cys-117. The interval 181–200 is disordered; it reads TERQVAVSKGEKPQDEGVEA. Positions 189–200 are enriched in basic and acidic residues; it reads KGEKPQDEGVEA.

This sequence belongs to the complex I 23 kDa subunit family. As to quaternary structure, NDH-1 is composed of 14 different subunits. Subunits NuoA, H, J, K, L, M, N constitute the membrane sector of the complex. [4Fe-4S] cluster is required as a cofactor.

It localises to the cell membrane. It catalyses the reaction a quinone + NADH + 5 H(+)(in) = a quinol + NAD(+) + 4 H(+)(out). Its function is as follows. NDH-1 shuttles electrons from NADH, via FMN and iron-sulfur (Fe-S) centers, to quinones in the respiratory chain. The immediate electron acceptor for the enzyme in this species is believed to be ubiquinone. Couples the redox reaction to proton translocation (for every two electrons transferred, four hydrogen ions are translocated across the cytoplasmic membrane), and thus conserves the redox energy in a proton gradient. The protein is NADH-quinone oxidoreductase subunit I 1 of Streptomyces avermitilis (strain ATCC 31267 / DSM 46492 / JCM 5070 / NBRC 14893 / NCIMB 12804 / NRRL 8165 / MA-4680).